Reading from the N-terminus, the 444-residue chain is N-succinylarginine dihydrolase (444 aa).

Substrate contacts are provided by residues 19 to 28, Asn-110, and 137 to 138; these read AGLSFGNVAS and HR. Residue Glu-174 is part of the active site. Residue Arg-214 participates in substrate binding. Residue His-250 is part of the active site. Positions 252 and 362 each coordinate substrate. The active-site Nucleophile is the Cys-368.

It belongs to the succinylarginine dihydrolase family. As to quaternary structure, homodimer.

It carries out the reaction N(2)-succinyl-L-arginine + 2 H2O + 2 H(+) = N(2)-succinyl-L-ornithine + 2 NH4(+) + CO2. The protein operates within amino-acid degradation; L-arginine degradation via AST pathway; L-glutamate and succinate from L-arginine: step 2/5. Its function is as follows. Catalyzes the hydrolysis of N(2)-succinylarginine into N(2)-succinylornithine, ammonia and CO(2). This Shewanella baltica (strain OS185) protein is N-succinylarginine dihydrolase.